Here is a 201-residue protein sequence, read N- to C-terminus: uncharacterized protein (201 aa).

The protein belongs to the mimivirus L885/R898 family.

This is an uncharacterized protein from Acanthamoeba polyphaga (Amoeba).